A 379-amino-acid polypeptide reads, in one-letter code: Cytochrome b (379 aa).

4 consecutive transmembrane segments (helical) span residues 33 to 53, 77 to 98, 113 to 133, and 178 to 198; these read FGSLLGMCLMIQILTGLFLAM, WLIRYLHANGASMFFICLFIHV, WNIGIILFLTTMATAFVGYVL, and FFAFHFILPFIITAFVLVHLL. Heme b-binding residues include His83 and His97. Residues His182 and His196 each coordinate heme b. His201 contributes to the a ubiquinone binding site. Helical transmembrane passes span 226 to 246, 288 to 308, 320 to 340, and 347 to 367; these read IKDLLGILFLLTALMILALFF, LGGVLALLLSILILMAFPLLN, ITQTIYWILIANLLVLTWIGG, and FTMIGQIASITYFAIILILMP.

The protein belongs to the cytochrome b family. The cytochrome bc1 complex contains 11 subunits: 3 respiratory subunits (MT-CYB, CYC1 and UQCRFS1), 2 core proteins (UQCRC1 and UQCRC2) and 6 low-molecular weight proteins (UQCRH/QCR6, UQCRB/QCR7, UQCRQ/QCR8, UQCR10/QCR9, UQCR11/QCR10 and a cleavage product of UQCRFS1). This cytochrome bc1 complex then forms a dimer. The cofactor is heme b.

It is found in the mitochondrion inner membrane. In terms of biological role, component of the ubiquinol-cytochrome c reductase complex (complex III or cytochrome b-c1 complex) that is part of the mitochondrial respiratory chain. The b-c1 complex mediates electron transfer from ubiquinol to cytochrome c. Contributes to the generation of a proton gradient across the mitochondrial membrane that is then used for ATP synthesis. The chain is Cytochrome b (MT-CYB) from Akodon dolores (Dolorous grass mouse).